The chain runs to 476 residues: 3-isopropylmalate dehydratase large subunit (476 aa).

Positions 353, 413, and 416 each coordinate [4Fe-4S] cluster.

It belongs to the aconitase/IPM isomerase family. LeuC type 1 subfamily. Heterodimer of LeuC and LeuD. Requires [4Fe-4S] cluster as cofactor.

It catalyses the reaction (2R,3S)-3-isopropylmalate = (2S)-2-isopropylmalate. The protein operates within amino-acid biosynthesis; L-leucine biosynthesis; L-leucine from 3-methyl-2-oxobutanoate: step 2/4. In terms of biological role, catalyzes the isomerization between 2-isopropylmalate and 3-isopropylmalate, via the formation of 2-isopropylmaleate. This chain is 3-isopropylmalate dehydratase large subunit, found in Yersinia pseudotuberculosis serotype IB (strain PB1/+).